The sequence spans 307 residues: Transcriptional repressor scratch 2 (307 aa).

The tract at residues 1-20 (MPRSFLVKKIKGDGFQCSGV) is SNAG domain. 2 disordered regions span residues 34-90 (LPGA…PQSS) and 116-148 (GRSRRRRGGGGGDAGGSGDAGGAGGRAGRAGAQ). Residues 124–148 (GGGGDAGGSGDAGGAGGRAGRAGAQ) are compositionally biased toward gly residues. C2H2-type zinc fingers lie at residues 155–177 (HACAECGKTYATSSNLSRHKQTH), 186–208 (RKCPTCGKAYVSMPALAMHLLTH), 212–234 (HKCGVCGKAFSRPWLLQGHMRSH), and 240–262 (FGCAHCGKAFADRSNLRAHMQTH). A C2H2-type 5; atypical zinc finger spans residues 268–291 (YRCRQCDKSFALKSYLHKHCEAAC).

Belongs to the snail C2H2-type zinc-finger protein family.

It localises to the nucleus. Functionally, may be involved in transcriptional regulation. In Homo sapiens (Human), this protein is Transcriptional repressor scratch 2 (SCRT2).